The chain runs to 39 residues: Photosystem II reaction center protein L (39 aa).

A helical transmembrane segment spans residues 16-37 (RTSLYLGLLLVAVLGILFSSYF).

The protein belongs to the PsbL family. PSII is composed of 1 copy each of membrane proteins PsbA, PsbB, PsbC, PsbD, PsbE, PsbF, PsbH, PsbI, PsbJ, PsbK, PsbL, PsbM, PsbT, PsbX, PsbY, PsbZ, Psb30/Ycf12, peripheral proteins PsbO, CyanoQ (PsbQ), PsbU, PsbV and a large number of cofactors. It forms dimeric complexes.

It localises to the cellular thylakoid membrane. One of the components of the core complex of photosystem II (PSII). PSII is a light-driven water:plastoquinone oxidoreductase that uses light energy to abstract electrons from H(2)O, generating O(2) and a proton gradient subsequently used for ATP formation. It consists of a core antenna complex that captures photons, and an electron transfer chain that converts photonic excitation into a charge separation. This subunit is found at the monomer-monomer interface and is required for correct PSII assembly and/or dimerization. Required for PSII activity, at least in part due to its effects on PSII assembly. May make specific contact(s) with lipids. This Synechocystis sp. (strain ATCC 27184 / PCC 6803 / Kazusa) protein is Photosystem II reaction center protein L.